The sequence spans 482 residues: tRNA sulfurtransferase (482 aa).

One can recognise a THUMP domain in the interval 61–165 (LTIRDALTRI…DDRLLLIKGR (105 aa)). ATP is bound by residues 183-184 (LI), lysine 265, glycine 287, and glutamine 296. The cysteines at positions 344 and 456 are disulfide-linked. One can recognise a Rhodanese domain in the interval 404-482 (FGPNDVILDI…GFNNVKVYRP (79 aa)). Residue cysteine 456 is the Cysteine persulfide intermediate of the active site.

This sequence belongs to the ThiI family.

The protein localises to the cytoplasm. The enzyme catalyses [ThiI sulfur-carrier protein]-S-sulfanyl-L-cysteine + a uridine in tRNA + 2 reduced [2Fe-2S]-[ferredoxin] + ATP + H(+) = [ThiI sulfur-carrier protein]-L-cysteine + a 4-thiouridine in tRNA + 2 oxidized [2Fe-2S]-[ferredoxin] + AMP + diphosphate. It carries out the reaction [ThiS sulfur-carrier protein]-C-terminal Gly-Gly-AMP + S-sulfanyl-L-cysteinyl-[cysteine desulfurase] + AH2 = [ThiS sulfur-carrier protein]-C-terminal-Gly-aminoethanethioate + L-cysteinyl-[cysteine desulfurase] + A + AMP + 2 H(+). The protein operates within cofactor biosynthesis; thiamine diphosphate biosynthesis. Functionally, catalyzes the ATP-dependent transfer of a sulfur to tRNA to produce 4-thiouridine in position 8 of tRNAs, which functions as a near-UV photosensor. Also catalyzes the transfer of sulfur to the sulfur carrier protein ThiS, forming ThiS-thiocarboxylate. This is a step in the synthesis of thiazole, in the thiamine biosynthesis pathway. The sulfur is donated as persulfide by IscS. This chain is tRNA sulfurtransferase, found in Shigella flexneri.